The primary structure comprises 296 residues: Phosphoribosylaminoimidazole-succinocarboxamide synthase (296 aa).

Belongs to the SAICAR synthetase family.

The catalysed reaction is 5-amino-1-(5-phospho-D-ribosyl)imidazole-4-carboxylate + L-aspartate + ATP = (2S)-2-[5-amino-1-(5-phospho-beta-D-ribosyl)imidazole-4-carboxamido]succinate + ADP + phosphate + 2 H(+). It functions in the pathway purine metabolism; IMP biosynthesis via de novo pathway; 5-amino-1-(5-phospho-D-ribosyl)imidazole-4-carboxamide from 5-amino-1-(5-phospho-D-ribosyl)imidazole-4-carboxylate: step 1/2. The polypeptide is Phosphoribosylaminoimidazole-succinocarboxamide synthase (Thioalkalivibrio sulfidiphilus (strain HL-EbGR7)).